The chain runs to 198 residues: NAD(P)H dehydrogenase (quinone) (198 aa).

The Flavodoxin-like domain occupies 4–189 (ILVLYYSMYG…SIARYQGEYV (186 aa)). FMN is bound by residues 10–15 (SMYGHI) and 78–80 (TRF). Tyr-12 provides a ligand contact to NAD(+). Trp-98 serves as a coordination point for substrate. FMN is bound by residues 113 to 118 (STGTGG) and His-133.

It belongs to the WrbA family. The cofactor is FMN.

It catalyses the reaction a quinone + NADH + H(+) = a quinol + NAD(+). It carries out the reaction a quinone + NADPH + H(+) = a quinol + NADP(+). In Citrobacter koseri (strain ATCC BAA-895 / CDC 4225-83 / SGSC4696), this protein is NAD(P)H dehydrogenase (quinone).